The following is a 75-amino-acid chain: Metallothionein-like protein 1 (75 aa).

The protein belongs to the metallothionein superfamily. Type 15 family.

In terms of biological role, metallothioneins have a high content of cysteine residues that bind various heavy metals. This chain is Metallothionein-like protein 1 (MTA), found in Pisum sativum (Garden pea).